Consider the following 149-residue polypeptide: D-aminoacyl-tRNA deacylase (149 aa).

Residues 137–138 (GP) carry the Gly-cisPro motif, important for rejection of L-amino acids motif.

Belongs to the DTD family. In terms of assembly, homodimer.

Its subcellular location is the cytoplasm. It carries out the reaction glycyl-tRNA(Ala) + H2O = tRNA(Ala) + glycine + H(+). The enzyme catalyses a D-aminoacyl-tRNA + H2O = a tRNA + a D-alpha-amino acid + H(+). An aminoacyl-tRNA editing enzyme that deacylates mischarged D-aminoacyl-tRNAs. Also deacylates mischarged glycyl-tRNA(Ala), protecting cells against glycine mischarging by AlaRS. Acts via tRNA-based rather than protein-based catalysis; rejects L-amino acids rather than detecting D-amino acids in the active site. By recycling D-aminoacyl-tRNA to D-amino acids and free tRNA molecules, this enzyme counteracts the toxicity associated with the formation of D-aminoacyl-tRNA entities in vivo and helps enforce protein L-homochirality. The polypeptide is D-aminoacyl-tRNA deacylase (Clostridium tetani (strain Massachusetts / E88)).